Reading from the N-terminus, the 774-residue chain is Transmembrane GTPase fzo-1 (774 aa).

A disordered region spans residues methionine 1–arginine 29. The Cytoplasmic portion of the chain corresponds to methionine 1–valine 617. Basic residues predominate over residues arginine 20 to arginine 29. Positions tyrosine 51–asparagine 71 form a coiled coil. Residues glutamine 97–glutamate 352 enclose the Dynamin-type G domain. Residues glycine 107–serine 114 form a G1 motif region. Serine 110–threonine 115 is a GTP binding site. The G2 motif stretch occupies residues threonine 133–threonine 134. The G3 motif stretch occupies residues aspartate 211–glycine 214. Position 270-273 (asparagine 270–aspartate 273) interacts with GTP. Residues asparagine 270 to aspartate 273 are G4 motif. Glutamate 300 is a region of interest (G5 motif). Serine 317 serves as a coordination point for GTP. The stretch at asparagine 385–arginine 415 forms a coiled coil. The helical transmembrane segment at leucine 618–valine 638 threads the bilayer. At tyrosine 639–lysine 640 the chain is on the mitochondrial intermembrane side. Residues alanine 641–glutamate 661 form a helical membrane-spanning segment. Residues arginine 662–proline 774 lie on the Cytoplasmic side of the membrane.

This sequence belongs to the TRAFAC class dynamin-like GTPase superfamily. Dynamin/Fzo/YdjA family. Mitofusin subfamily. In terms of assembly, interacts with ced-9; interaction may be suppressed by interaction of ced-9 with egl-1.

It localises to the mitochondrion outer membrane. It catalyses the reaction GTP + H2O = GDP + phosphate + H(+). Probable transmembrane GTPase. Mediates mitochondrial fusion. Fusion of mitochondria occurs in many cell types and constitutes an important step in mitochondria morphology, which is balanced between fusion and fission. Dispensable for normal apoptotic processes during embryonic development. This chain is Transmembrane GTPase fzo-1, found in Caenorhabditis elegans.